A 143-amino-acid chain; its full sequence is Mannitol-specific phosphotransferase enzyme IIA component (143 aa).

One can recognise a PTS EIIA type-2 domain in the interval 2–142; the sequence is QVLAKENIKL…EDLIAIFNEV (141 aa). The Tele-phosphohistidine intermediate role is filled by His-62. At His-62 the chain carries Phosphohistidine; by HPr. Ser-74 carries the phosphoserine modification.

It is found in the cytoplasm. In terms of biological role, the phosphoenolpyruvate-dependent sugar phosphotransferase system (sugar PTS), a major carbohydrate active transport system, catalyzes the phosphorylation of incoming sugar substrates concomitantly with their translocation across the cell membrane. The enzyme II CmtAB PTS system is involved in D-mannitol transport. The protein is Mannitol-specific phosphotransferase enzyme IIA component (mtlF) of Bacillus subtilis (strain 168).